Here is a 72-residue protein sequence, read N- to C-terminus: Delta-actitoxin-Avd2b 1 (72 aa).

A signal peptide spans 1–21 (MMNRLLVFLMLGAAFMLVVSA). Residues 22 to 42 (NDAYGDEPAFKDLNQGDESLG) constitute a propeptide that is removed on maturation. Disulfide bonds link Cys-47/Cys-62, Cys-48/Cys-56, and Cys-50/Cys-67.

Belongs to the sea anemone short toxin (type III) family.

Its subcellular location is the secreted. The protein resides in the nematocyst. In terms of biological role, voltage-gated sodium channel (Nav) inhibitor. 1 uM completely inhibits insect voltage-gated sodium channel inactivation (DmNav1 from D.melanogaster). This is Delta-actitoxin-Avd2b 1 from Anemonia viridis (Snakelocks anemone).